Here is a 46-residue protein sequence, read N- to C-terminus: Photosystem II reaction center protein K (46 aa).

Positions 1–9 (MSTLPILLA) are excised as a propeptide. A helical membrane pass occupies residues 25-45 (LPSIPVLFLLLAFVWQAAVSF).

This sequence belongs to the PsbK family. PSII is composed of 1 copy each of membrane proteins PsbA, PsbB, PsbC, PsbD, PsbE, PsbF, PsbH, PsbI, PsbJ, PsbK, PsbL, PsbM, PsbT, PsbX, PsbY, PsbZ, Psb30/Ycf12, at least 3 peripheral proteins of the oxygen-evolving complex and a large number of cofactors. It forms dimeric complexes.

It is found in the plastid. It localises to the chloroplast thylakoid membrane. In terms of biological role, one of the components of the core complex of photosystem II (PSII). PSII is a light-driven water:plastoquinone oxidoreductase that uses light energy to abstract electrons from H(2)O, generating O(2) and a proton gradient subsequently used for ATP formation. It consists of a core antenna complex that captures photons, and an electron transfer chain that converts photonic excitation into a charge separation. The protein is Photosystem II reaction center protein K of Nephroselmis olivacea (Green alga).